The following is a 475-amino-acid chain: Ribulose bisphosphate carboxylase large chain (475 aa).

A propeptide spanning residues 1 to 2 (MS) is cleaved from the precursor. Pro3 bears the N-acetylproline mark. Lys14 is modified (N6,N6,N6-trimethyllysine). Substrate-binding residues include Asn123 and Thr173. Lys175 (proton acceptor) is an active-site residue. Lys177 serves as a coordination point for substrate. Lys201, Asp203, and Glu204 together coordinate Mg(2+). Lys201 carries the post-translational modification N6-carboxylysine. His294 (proton acceptor) is an active-site residue. Arg295, His327, and Ser379 together coordinate substrate.

Belongs to the RuBisCO large chain family. Type I subfamily. Heterohexadecamer of 8 large chains and 8 small chains; disulfide-linked. The disulfide link is formed within the large subunit homodimers. Mg(2+) serves as cofactor. Post-translationally, the disulfide bond which can form in the large chain dimeric partners within the hexadecamer appears to be associated with oxidative stress and protein turnover.

The protein resides in the plastid. It localises to the chloroplast. It carries out the reaction 2 (2R)-3-phosphoglycerate + 2 H(+) = D-ribulose 1,5-bisphosphate + CO2 + H2O. The enzyme catalyses D-ribulose 1,5-bisphosphate + O2 = 2-phosphoglycolate + (2R)-3-phosphoglycerate + 2 H(+). In terms of biological role, ruBisCO catalyzes two reactions: the carboxylation of D-ribulose 1,5-bisphosphate, the primary event in carbon dioxide fixation, as well as the oxidative fragmentation of the pentose substrate in the photorespiration process. Both reactions occur simultaneously and in competition at the same active site. This chain is Ribulose bisphosphate carboxylase large chain, found in Larix occidentalis (Western larch).